The sequence spans 52 residues: Stable plasmid inheritance protein (52 aa).

The chain crosses the membrane as a helical span at residues 6-26 (SSLVWCVLIVCLTLLIFTYLT).

This sequence belongs to the Hok/Gef family.

It is found in the cell inner membrane. Functionally, toxic component of a type I toxin-antitoxin (TA) system. Part of the plasmid maintenance system, encodes a toxic protein that collapses the transmembrane potential and arrests respiration. When the adjacent non-translated flmB (sok) gene is disrupted FlmA no longer functions in plasmid maintenance (i.e. FlmB probably encodes an antisense antitoxin RNA). Translation of FlmA may be coupled to the upstream flmC gene. The chain is Stable plasmid inheritance protein (flmA) from Escherichia coli O157:H7.